The following is a 160-amino-acid chain: Ribosomal RNA large subunit methyltransferase H (160 aa).

The disordered stretch occupies residues 44-63; it reads LPESRASNSATRKREEAVQI. Residues L76, G108, and 127–132 each bind S-adenosyl-L-methionine; that span reads LGKMTW.

This sequence belongs to the RNA methyltransferase RlmH family. As to quaternary structure, homodimer.

The protein localises to the cytoplasm. The catalysed reaction is pseudouridine(1915) in 23S rRNA + S-adenosyl-L-methionine = N(3)-methylpseudouridine(1915) in 23S rRNA + S-adenosyl-L-homocysteine + H(+). Its function is as follows. Specifically methylates the pseudouridine at position 1915 (m3Psi1915) in 23S rRNA. The protein is Ribosomal RNA large subunit methyltransferase H of Allorhizobium ampelinum (strain ATCC BAA-846 / DSM 112012 / S4) (Agrobacterium vitis (strain S4)).